A 906-amino-acid polypeptide reads, in one-letter code: Eukaryotic translation initiation factor 3 subunit C (906 aa).

Residues 1-22 (MSRFFANGSDSESESSEEEVQA) form a disordered region. Residues 11–20 (SESESSEEEV) show a composition bias toward acidic residues. Phosphoserine occurs at positions 34, 165, 176, and 185. The segment at 158–283 (REAPDQESEA…KRPEDDEDGE (126 aa)) is disordered. Over residues 162-186 (DQESEAEDEEAAQDSDGGDAGDDSD) the composition is skewed to acidic residues. Low complexity predominate over residues 195-209 (EAAPKVAKTVPAKAA). Acidic residues predominate over residues 211–237 (ADDDDSDDSIDWDSDSETETESSDDEN). Over residues 242–270 (MRERFLKRTTEKEEKDDDKRKDKRKEQKI) the composition is skewed to basic and acidic residues. The 177-residue stretch at 641-817 (FHMHINLELL…ETVVMHRSEP (177 aa)) folds into the PCI domain. 2 disordered regions span residues 853–873 (GNMG…NWGG) and 887–906 (QRGR…IDEE). The segment covering 894-906 (QQQQQQVQTIDEE) has biased composition (low complexity).

Belongs to the eIF-3 subunit C family. Component of the eukaryotic translation initiation factor 3 (eIF-3) complex. The eIF-3 complex interacts with pix.

Its subcellular location is the cytoplasm. Component of the eukaryotic translation initiation factor 3 (eIF-3) complex, which is involved in protein synthesis of a specialized repertoire of mRNAs and, together with other initiation factors, stimulates binding of mRNA and methionyl-tRNAi to the 40S ribosome. The eIF-3 complex specifically targets and initiates translation of a subset of mRNAs involved in cell proliferation. The chain is Eukaryotic translation initiation factor 3 subunit C from Drosophila ananassae (Fruit fly).